We begin with the raw amino-acid sequence, 185 residues long: Pro-adrenomedullin (185 aa).

A signal peptide spans 1 to 21 (MKLVSIALMLLGSLAVLGADT). Residue Arg-41 is modified to Arginine amide. Positions 45–91 (ELQASSSYPTGLVDEKTVPTQTLGLQDKQSTSSTPQASTQSTAHIRV) are excised as a propeptide. The interval 68–89 (GLQDKQSTSSTPQASTQSTAHI) is disordered. Residues 73-87 (QSTSSTPQASTQSTA) show a composition bias toward low complexity. Cysteines 107 and 112 form a disulfide. The segment at 125–185 (TDKDKDGMAP…HQDISRVSRL (61 aa)) is disordered. Tyr-143 is modified (tyrosine amide). Residues 150-185 (SLPEVLRARTVESSQEQTHSAPASPAHQDISRVSRL) constitute a propeptide, preproAM C-terminal fragment. The segment covering 160–170 (VESSQEQTHSA) has biased composition (polar residues).

It belongs to the adrenomedullin family. Expressed in adrenal glands, lung, kidney, heart, spleen, duodenum and submandibular glands.

The protein resides in the secreted. In terms of biological role, adrenomedullin/ADM and proadrenomedullin N-20 terminal peptide/PAMP are peptide hormones that act as potent hypotensive and vasodilatator agents. Numerous actions have been reported most related to the physiologic control of fluid and electrolyte homeostasis. Its function is as follows. ADM function is mediated by the CALCRL-RAMP2 and CALCRL-RAMP3 receptor complexes with ADM showing the highest potency for the CALCRL-RAMP2 complex. The polypeptide is Pro-adrenomedullin (Rattus norvegicus (Rat)).